The primary structure comprises 620 residues: Glutathione-regulated potassium-efflux system protein KefC (620 aa).

12 helical membrane-spanning segments follow: residues 4–24 (HTLI…PIAV), 26–46 (LGLG…PWGL), 54–74 (SILH…GLEL), 90–110 (GALQ…FLGL), 114–134 (VAEL…MQAM), 149–169 (FAVL…IPLL), 178–198 (MGAF…VVLL), 218–238 (VFSA…EEVG), 270–290 (GLLL…GTLL), 294–314 (LRIV…LWLI), 327–347 (WFAV…GAAQ), and 359–379 (SLTL…VILN). In terms of domain architecture, RCK N-terminal spans 399-518 (QPRVIIAGFG…AGVEKPERET (120 aa)). The tract at residues 597-620 (GWQGTEEGKHTGNMADEPETKPSS) is disordered.

It belongs to the monovalent cation:proton antiporter 2 (CPA2) transporter (TC 2.A.37) family. KefC subfamily. In terms of assembly, homodimer. Interacts with the regulatory subunit KefF.

It is found in the cell inner membrane. Pore-forming subunit of a potassium efflux system that confers protection against electrophiles. Catalyzes K(+)/H(+) antiport. This chain is Glutathione-regulated potassium-efflux system protein KefC, found in Escherichia fergusonii (strain ATCC 35469 / DSM 13698 / CCUG 18766 / IAM 14443 / JCM 21226 / LMG 7866 / NBRC 102419 / NCTC 12128 / CDC 0568-73).